Reading from the N-terminus, the 842-residue chain is MSNILRKVIENDKGELRKLEKIAKKVESYADYMESLSDKDLQAKTPEFKQRYQNGETLEQLLPEAFAVVREAARRVLGLYPYRVQIMGGIVLHNGDVPEMRTGEGKTLTATMPVYLNALAGKGVHVITVNEYLSTRDATEMGEVYSWLGLSVGINLAAKSPAEKREAYLCDITYSTNSEVGFDYLRDNMVVRQEDMVQRPLNFALVDEVDSVLIDEARTPLIVSGAVSSETNQLYIRADMFVKTLDSVDYIIDVPTKTIGLSDSGIDKAESYFNLSNLYDIENVALTHFVDNALRANYIMLLDIDYVVSEEGEILIVDQFTGRTMEGRRFSDGLHQAIEAKEGVRIQEESKTSASITYQNMFRMYKKLAGMTGTAKTEEEEFREVYNMRIIPIPTNRPIARIDHTDLLYATLNSKFKAVVADVKARYEKGQPVLVGTVAVETSDLISKKLVEAGIPHEVLNAKNHFKEAQIIMNAGQRGAVTIATNMAGRGTDIKLGEGVRELGGLCVIGTERHESRRIDNQLRGRSGRQGDPGESQFYLSLEDELMRRFGTDRIKAFLDRMNHDDEDIVIKSRMLSRQVESAQKRVEGNNYDTRKQVLQYDDVMREQREIIYANRRDVITANRDLGPEIKAMIKRTIDRAVDAHSRTNRKDAIDAIVTFARTSIVPEETIGAKELRGLKDDQIKDKLYQRALEIYDKQLSKLRDQDAILEFQKVLILMIVDNKWTEHIDALDQLRNAVGLRGYAQNNPVVEYQSEGFKMFQDMIGAIEFDVTRTMMKAQIHEQERERATQYATTTAAQNIQSQAIGADFDSSADFSRVERNDACPCHSGKKFKNCHGRKAF.

ATP contacts are provided by residues Gln-85, 103-107 (GEGKT), and Asp-493. Zn(2+) contacts are provided by Cys-825, Cys-827, Cys-836, and His-837.

Belongs to the SecA family. As to quaternary structure, monomer and homodimer. Part of the essential Sec protein translocation apparatus which comprises SecA, SecYEG and auxiliary proteins SecDF. Other proteins may also be involved. Requires Zn(2+) as cofactor.

It is found in the cell membrane. The protein resides in the cytoplasm. The catalysed reaction is ATP + H2O + cellular proteinSide 1 = ADP + phosphate + cellular proteinSide 2.. Part of the Sec protein translocase complex. Interacts with the SecYEG preprotein conducting channel. Has a central role in coupling the hydrolysis of ATP to the transfer of proteins into and across the cell membrane, serving as an ATP-driven molecular motor driving the stepwise translocation of polypeptide chains across the membrane. In Streptococcus equi subsp. zooepidemicus (strain MGCS10565), this protein is Protein translocase subunit SecA.